Reading from the N-terminus, the 157-residue chain is Cyclic pyranopterin monophosphate synthase (157 aa).

Substrate-binding positions include 75–77 (LCH) and 111–112 (ME). Asp126 is a catalytic residue.

This sequence belongs to the MoaC family. Homohexamer; trimer of dimers.

The catalysed reaction is (8S)-3',8-cyclo-7,8-dihydroguanosine 5'-triphosphate = cyclic pyranopterin phosphate + diphosphate. It functions in the pathway cofactor biosynthesis; molybdopterin biosynthesis. Functionally, catalyzes the conversion of (8S)-3',8-cyclo-7,8-dihydroguanosine 5'-triphosphate to cyclic pyranopterin monophosphate (cPMP). This Novosphingobium aromaticivorans (strain ATCC 700278 / DSM 12444 / CCUG 56034 / CIP 105152 / NBRC 16084 / F199) protein is Cyclic pyranopterin monophosphate synthase.